The primary structure comprises 378 residues: Succinate--CoA ligase [GDP-forming] subunit beta (378 aa).

The ATP-grasp domain occupies 9 to 235 (KEILARYGVP…VEAEHPLEVE (227 aa)). Residues K45, 52–54 (GRG), V94, and E99 contribute to the GTP site. Positions 190 and 204 each coordinate Mg(2+). Substrate contacts are provided by residues N255 and 312-314 (GIT).

The protein belongs to the succinate/malate CoA ligase beta subunit family. Heterotetramer of two alpha and two beta subunits. Mg(2+) is required as a cofactor.

The catalysed reaction is GTP + succinate + CoA = succinyl-CoA + GDP + phosphate. It catalyses the reaction succinate + ATP + CoA = succinyl-CoA + ADP + phosphate. The protein operates within carbohydrate metabolism; tricarboxylic acid cycle; succinate from succinyl-CoA (ligase route): step 1/1. Succinyl-CoA synthetase functions in the citric acid cycle (TCA), coupling the hydrolysis of succinyl-CoA to the synthesis of either ATP or GTP and thus represents the only step of substrate-level phosphorylation in the TCA. The beta subunit provides nucleotide specificity of the enzyme and binds the substrate succinate, while the binding sites for coenzyme A and phosphate are found in the alpha subunit. Can use either ATP or GTP, but prefers GTP. This Thermus thermophilus protein is Succinate--CoA ligase [GDP-forming] subunit beta.